Reading from the N-terminus, the 124-residue chain is Fluoride-specific ion channel FluC (124 aa).

A run of 4 helical transmembrane segments spans residues 4 to 24 (IVAI…LAGW), 32 to 52 (GFPY…GLIM), 67 to 87 (IGLT…SYET), and 96 to 116 (FITA…CTWL). The Na(+) site is built by glycine 75 and threonine 78.

The protein belongs to the fluoride channel Fluc/FEX (TC 1.A.43) family.

It is found in the cell inner membrane. It catalyses the reaction fluoride(in) = fluoride(out). Na(+) is not transported, but it plays an essential structural role and its presence is essential for fluoride channel function. Fluoride-specific ion channel. Important for reducing fluoride concentration in the cell, thus reducing its toxicity. The chain is Fluoride-specific ion channel FluC from Geobacter metallireducens (strain ATCC 53774 / DSM 7210 / GS-15).